Reading from the N-terminus, the 207-residue chain is Large ribosomal subunit protein uL4 (207 aa).

The segment at 44–78 (QRQGTHDVKNRSEVRGGGRKPWRQKGTGRARQGSI) is disordered. Over residues 47–59 (GTHDVKNRSEVRG) the composition is skewed to basic and acidic residues. Residues 60–71 (GGRKPWRQKGTG) are compositionally biased toward basic residues.

Belongs to the universal ribosomal protein uL4 family. In terms of assembly, part of the 50S ribosomal subunit.

Its function is as follows. One of the primary rRNA binding proteins, this protein initially binds near the 5'-end of the 23S rRNA. It is important during the early stages of 50S assembly. It makes multiple contacts with different domains of the 23S rRNA in the assembled 50S subunit and ribosome. Functionally, forms part of the polypeptide exit tunnel. In Brevibacillus brevis (strain 47 / JCM 6285 / NBRC 100599), this protein is Large ribosomal subunit protein uL4.